Consider the following 355-residue polypeptide: uncharacterized protein (355 aa).

58-65 contributes to the ATP binding site; that stretch reads GYIIFGIK.

This is an uncharacterized protein from Ureaplasma parvum serovar 3 (strain ATCC 700970).